A 65-amino-acid polypeptide reads, in one-letter code: UPF0434 protein BBta_0300 (65 aa).

Belongs to the UPF0434 family.

In Bradyrhizobium sp. (strain BTAi1 / ATCC BAA-1182), this protein is UPF0434 protein BBta_0300.